We begin with the raw amino-acid sequence, 1004 residues long: Sal-like protein 2 (1004 aa).

Disordered stretches follow at residues Met1–Pro33, Ala51–Ser122, Gly137–Leu177, Pro220–Lys270, and Pro285–Gly307. The segment at Gln34–Cys56 adopts a C2H2-type 1; atypical zinc-finger fold. A compositionally biased stretch (low complexity) spans Asn71–Pro81. The segment covering Pro83–Asn98 has biased composition (basic and acidic residues). The span at Pro99–Pro110 shows a compositional bias: low complexity. A compositionally biased stretch (pro residues) spans Pro151–Gly171. Ser243 bears the Phosphoserine mark. 5 consecutive C2H2-type zinc fingers follow at residues His372–His394, Tyr400–His422, Asn629–His651, Phe657–His679, and Asn689–His711. The disordered stretch occupies residues Leu712–Cys910. Residues Gln731–Gly742 show a composition bias toward polar residues. Residues Pro756–Ser779 show a composition bias toward acidic residues. Phosphoserine is present on residues Ser794, Ser799, and Ser803. A compositionally biased stretch (acidic residues) spans Glu800–Val809. Residues Ala810–Val819 are compositionally biased toward low complexity. The segment covering Lys820–Pro829 has biased composition (basic and acidic residues). Residues Thr832–Asp841 show a composition bias toward pro residues. A compositionally biased stretch (basic and acidic residues) spans Ala896–Cys910. Residue Lys908 forms a Glycyl lysine isopeptide (Lys-Gly) (interchain with G-Cter in ubiquitin) linkage. 2 C2H2-type zinc fingers span residues Lys908 to His930 and Phe937 to His961.

The protein belongs to the sal C2H2-type zinc-finger protein family. As to expression, expressed throughout embryonic development. In adult predominantly in brain.

The protein resides in the nucleus. Its function is as follows. Probable transcription factor that plays a role in eye development before, during, and after optic fissure closure. The protein is Sal-like protein 2 (Sall2) of Mus musculus (Mouse).